Here is a 282-residue protein sequence, read N- to C-terminus: Bifunctional protein FolD (282 aa).

NADP(+) contacts are provided by residues 164 to 166 (GRS) and S189.

The protein belongs to the tetrahydrofolate dehydrogenase/cyclohydrolase family. Homodimer.

It carries out the reaction (6R)-5,10-methylene-5,6,7,8-tetrahydrofolate + NADP(+) = (6R)-5,10-methenyltetrahydrofolate + NADPH. The catalysed reaction is (6R)-5,10-methenyltetrahydrofolate + H2O = (6R)-10-formyltetrahydrofolate + H(+). It participates in one-carbon metabolism; tetrahydrofolate interconversion. Its function is as follows. Catalyzes the oxidation of 5,10-methylenetetrahydrofolate to 5,10-methenyltetrahydrofolate and then the hydrolysis of 5,10-methenyltetrahydrofolate to 10-formyltetrahydrofolate. This chain is Bifunctional protein FolD, found in Streptococcus suis (strain 05ZYH33).